Here is an 802-residue protein sequence, read N- to C-terminus: Homeobox-leucine zipper protein ANTHOCYANINLESS 2 (802 aa).

Residues 71–143 form a disordered region; it reads QPERGTNRGE…RKKRYHRHTP (73 aa). Basic and acidic residues predominate over residues 103–113; sequence RSREEEHESRS. Positions 133 to 142 are enriched in basic residues; sequence PRKKRYHRHT. The segment at residues 134–193 is a DNA-binding region (homeobox); it reads RKKRYHRHTPQQIQELESMFKECPHPDEKQRLELSKRLCLETRQVKFWFQNRRTQMKTQL. A coiled-coil region spans residues 182 to 221; the sequence is FQNRRTQMKTQLERHENALLRQENDKLRAENMSIREAMRN. In terms of domain architecture, START spans 315–546; sequence GIDQKSVLLE…LQRQCECLAI (232 aa).

This sequence belongs to the HD-ZIP homeobox family. Class IV subfamily. Interacts with AIL7/PLT7, ANT, BBM and AIL1. In terms of tissue distribution, expressed in roots, stems, leaves and floral buds.

The protein localises to the nucleus. Probable transcription factor involved in the regulation of the tissue-specific accumulation of anthocyanins and in cellular organization of the primary root. The protein is Homeobox-leucine zipper protein ANTHOCYANINLESS 2 of Arabidopsis thaliana (Mouse-ear cress).